A 188-amino-acid chain; its full sequence is Ribosome-recycling factor (188 aa).

It belongs to the RRF family.

The protein localises to the cytoplasm. In terms of biological role, responsible for the release of ribosomes from messenger RNA at the termination of protein biosynthesis. May increase the efficiency of translation by recycling ribosomes from one round of translation to another. This is Ribosome-recycling factor from Gluconobacter oxydans (strain 621H) (Gluconobacter suboxydans).